Reading from the N-terminus, the 1193-residue chain is Pyruvate carboxylase (1193 aa).

Residues 41–493 (QFQKILVANR…WTTFIDDTPE (453 aa)) enclose the Biotin carboxylation domain. ATP is bound by residues K159, E243, and H278. The ATP-grasp domain occupies 163–360 (RQLAIRCNVP…IVAAQIQIAA (198 aa)). Residue R335 is part of the active site. The Pyruvate carboxyltransferase domain occupies 579–847 (CLIMDTTWRD…DPGLNSAHVR (269 aa)). Residues 587 to 591 (RDAHQ) and R660 each bind substrate. Residue D588 participates in a divalent metal cation binding. A divalent metal cation is bound by residues K756, H786, and H788. Residue K756 is modified to N6-carboxylysine. Substrate is bound at residue T921. The region spanning 1116 to 1191 (KADVGDSSQV…DGQDLVCKIT (76 aa)) is the Biotinyl-binding domain. K1157 carries the post-translational modification N6-biotinyllysine.

The cofactor is biotin. Zn(2+) is required as a cofactor.

The protein localises to the cytoplasm. It catalyses the reaction hydrogencarbonate + pyruvate + ATP = oxaloacetate + ADP + phosphate + H(+). It functions in the pathway carbohydrate biosynthesis; gluconeogenesis. Functionally, pyruvate carboxylase catalyzes a 2-step reaction, involving the ATP-dependent carboxylation of the covalently attached biotin in the first step and the transfer of the carboxyl group to pyruvate in the second. The polypeptide is Pyruvate carboxylase (pyc) (Aspergillus terreus).